The chain runs to 125 residues: MNKTVGPPTITPTGLSGGMNSTTGSSSTSNIYSSYYKAIDQFQNKNTTDKDLHETLKQGPISSNLFYNNFLNELNNKNNNFNNNNNNNNNNNSNSNNNNNNNSNIVYSNNMSNNYNNNYNNRFKK.

Disordered stretches follow at residues 1-27 (MNKT…GSSS) and 76-125 (NKNN…RFKK). Residues 18 to 27 (GMNSTTGSSS) are compositionally biased toward low complexity.

This is an uncharacterized protein from Dictyostelium discoideum (Social amoeba).